Here is a 259-residue protein sequence, read N- to C-terminus: Phosphate import ATP-binding protein PstB (259 aa).

Positions A11 to I254 constitute an ABC transporter domain. G43–S50 provides a ligand contact to ATP.

Belongs to the ABC transporter superfamily. Phosphate importer (TC 3.A.1.7) family. In terms of assembly, the complex is composed of two ATP-binding proteins (PstB), two transmembrane proteins (PstC and PstA) and a solute-binding protein (PstS).

Its subcellular location is the cell inner membrane. The catalysed reaction is phosphate(out) + ATP + H2O = ADP + 2 phosphate(in) + H(+). Its function is as follows. Part of the ABC transporter complex PstSACB involved in phosphate import. Responsible for energy coupling to the transport system. This chain is Phosphate import ATP-binding protein PstB, found in Geobacter sulfurreducens (strain ATCC 51573 / DSM 12127 / PCA).